Reading from the N-terminus, the 524-residue chain is Zinc finger CCCH domain-containing protein 37 (524 aa).

The interval 19–39 (ASTVSPAPPPPQQPLPPKTGL) is disordered. Residues 24-35 (PAPPPPQQPLPP) are compositionally biased toward pro residues. C3H1-type zinc fingers lie at residues 174-202 (RAGE…HPIW), 225-253 (RPGE…HPRE), and 268-296 (RPSE…HPKD). Residues 300-319 (PSSSQDIGSSVGLTSEPDAT) form a disordered region. 3 consecutive C3H1-type zinc fingers follow at residues 340-368 (RSGE…HPER), 420-448 (RPGQ…HPAD), and 473-501 (REGA…HPPP). The tract at residues 505-524 (MAKTTSEADAAGATNTDTTQ) is disordered. The span at 512–524 (ADAAGATNTDTTQ) shows a compositional bias: low complexity.

In terms of assembly, interacts with HEN4. Interacts with FLK and PEP. In terms of tissue distribution, highly expressed in inflorescences, at intermediate levels in leaves and stems and at lower levels in roots.

Its subcellular location is the nucleus speckle. In terms of biological role, involved in flower development. Functions in floral reproductive organ identity by binding AGAMOUS (AG) pre-mRNA and promoting its processing. Functions in association with HUA2 and HEN4. In Arabidopsis thaliana (Mouse-ear cress), this protein is Zinc finger CCCH domain-containing protein 37 (HUA1).